A 318-amino-acid chain; its full sequence is Protein-L-histidine N-pros-methyltransferase (318 aa).

An N-terminal signal peptide occupies residues 1 to 18; it reads MRLLAGWLCLSLASVWLA. A glycan (N-linked (GlcNAc...) asparagine) is linked at asparagine 35. Positions 174, 210, and 295 each coordinate S-adenosyl-L-homocysteine.

It belongs to the METTL9 family.

The protein resides in the endoplasmic reticulum. It localises to the mitochondrion. The catalysed reaction is L-histidyl-[protein] + S-adenosyl-L-methionine = N(pros)-methyl-L-histidyl-[protein] + S-adenosyl-L-homocysteine + H(+). Functionally, protein-histidine N-methyltransferase that specifically catalyzes 1-methylhistidine (pros-methylhistidine) methylation of target proteins. Specifically methylates the second His of proteins with a His-x-His (HxH) motif (where 'x' is preferably a small amino acid), while exploiting the first one as a recognition signature. Catalyzes methylation of target proteins such as S100A9, NDUFB3, SLC39A5, SLC39A7, ARMC6 and DNAJB12; 1-methylhistidine modification may affect the binding of zinc and other metals to its target proteins. Constitutes the main methyltransferase for the 1-methylhistidine modification in cell. The protein is Protein-L-histidine N-pros-methyltransferase of Homo sapiens (Human).